A 233-amino-acid polypeptide reads, in one-letter code: Ras-related protein RABA6a (233 aa).

A GTP-binding site is contributed by 20–27; that stretch reads GDSAVGKS. Residues 42–50 carry the Effector region motif; the sequence is SKPTIGVEF. GTP is bound by residues 68 to 72, 126 to 129, and 156 to 157; these read DTAGQ, NKSD, and SA. S-geranylgeranyl cysteine attachment occurs at residues cysteine 230 and cysteine 231.

Belongs to the small GTPase superfamily. Rab family.

It is found in the cell membrane. Intracellular vesicle trafficking and protein transport. The chain is Ras-related protein RABA6a (RABA6A) from Arabidopsis thaliana (Mouse-ear cress).